Reading from the N-terminus, the 880-residue chain is uncharacterized protein (880 aa).

Disordered stretches follow at residues 101–149 (KPIP…LRSE), 191–224 (PETS…ISTH), 240–273 (TTTT…PILK), 294–350 (NSNS…STTS), 425–446 (QPDS…ESQP), 470–508 (STST…SSSS), 536–561 (MESS…NDNS), 580–613 (APQS…NDDE), 682–713 (NTNT…NINN), and 844–880 (NSSG…KSEI). Residues 113–147 (ISIKEKEKEKEKEKEKEKEKEKEKEKEMKSTINLR) are a coiled coil. The span at 115–149 (IKEKEKEKEKEKEKEKEKEKEKEKEMKSTINLRSE) shows a compositional bias: basic and acidic residues. 2 stretches are compositionally biased toward low complexity: residues 193–223 (TSTP…SIST) and 240–256 (TTTT…PSSS). Residues 257–271 (IAGITNPTSRSSSPI) show a composition bias toward polar residues. Residues 294–332 (NSNSSSGGGNNNNKSISTPSSPIISRPITNKINNNNNNN) are compositionally biased toward low complexity. Residues 333 to 342 (QPQLHYNQPQ) show a composition bias toward polar residues. A compositionally biased stretch (low complexity) spans 536–548 (MESSTTTTLLSEN). Positions 589–613 (QPEDDPFFDFEDLSDDDDSNDNDDE) are enriched in acidic residues. The segment covering 844–864 (NSSGSGNNSNDNSGSSSPSSS) has biased composition (low complexity). Positions 865-880 (KTNTLNQQSICIKSEI) are enriched in polar residues.

This is an uncharacterized protein from Dictyostelium discoideum (Social amoeba).